Reading from the N-terminus, the 320-residue chain is o-succinylbenzoate synthase (320 aa).

Lysine 133 functions as the Proton donor in the catalytic mechanism. 3 residues coordinate Mg(2+): aspartate 161, glutamate 190, and aspartate 213. Lysine 235 functions as the Proton acceptor in the catalytic mechanism.

It belongs to the mandelate racemase/muconate lactonizing enzyme family. MenC type 1 subfamily. The cofactor is a divalent metal cation.

It catalyses the reaction (1R,6R)-6-hydroxy-2-succinyl-cyclohexa-2,4-diene-1-carboxylate = 2-succinylbenzoate + H2O. Its pathway is quinol/quinone metabolism; 1,4-dihydroxy-2-naphthoate biosynthesis; 1,4-dihydroxy-2-naphthoate from chorismate: step 4/7. It functions in the pathway quinol/quinone metabolism; menaquinone biosynthesis. Converts 2-succinyl-6-hydroxy-2,4-cyclohexadiene-1-carboxylate (SHCHC) to 2-succinylbenzoate (OSB). In Salmonella paratyphi C (strain RKS4594), this protein is o-succinylbenzoate synthase.